We begin with the raw amino-acid sequence, 448 residues long: Phosphoglucosamine mutase (448 aa).

Catalysis depends on Ser-100, which acts as the Phosphoserine intermediate. The Mg(2+) site is built by Ser-100, Asp-240, Asp-242, and Asp-244. A Phosphoserine modification is found at Ser-100.

Belongs to the phosphohexose mutase family. Requires Mg(2+) as cofactor. In terms of processing, activated by phosphorylation.

It carries out the reaction alpha-D-glucosamine 1-phosphate = D-glucosamine 6-phosphate. In terms of biological role, catalyzes the conversion of glucosamine-6-phosphate to glucosamine-1-phosphate. The chain is Phosphoglucosamine mutase from Bacillus pumilus (strain SAFR-032).